Reading from the N-terminus, the 758-residue chain is MSMFNKVTKTFQWGDKTVVMETGEIARQATGAVLVNIDDTVVLATVVASKSAKPGQDFFPLTVDYIEKTYAAGKIPGSFFKREAKPSELETLTSRLIDRPIRPLFPEGFYNEVHVVIHTVSLNPEVDADIAAMIAVSAALSVSGIPFNGPIGAARVGYINGEYVLNPGQTARKNSQMDLVVAGTEAAVLMVESEAQQLSEDIMLGAVVFGHEQGRIAINAIHELVRDAGKPVWDWQPAAKDEPFIAKVTQLAEEKLRAAYQIRSKQARTQALREASASVLESLKAEGADFDAVKVEALLFDIEAKIVRSQILAGEPRIDGRDTRTVRPIEIRNSVLPRTHGSALFTRGETQALVVSTLGTERDAQRIDALAGEFEDRFMFHYNMPPFATGEVGRMGSTKRREIGHGRLAKRALVAVLPTKEEFPYTIRVVSEITESNGSSSMASVCGGCLSMMDAGVPMKAHVAGIAMGLIKEDNRFAVLTDILGDEDHLGDMDFKVAGTTAGITALQMDIKIQGITKEIMQVALAQAKEARLHILGKMQEAMGEAKTEVSSFAPKLYTMKINPEKIRDVIGKGGAVIRALTEETGTQINIDEDGTITIASTDSAKADEAKRRIEQITAEVEIGKIYEGPVVKILDFGALINLLPGKDGLLHISQIAHERVEKVTDYLTEGQVVKVKVLETDEKGRVKLSMRALLDRPMGDSGRPAPAERGERGDRGDRGDRPERGERRERREPAGADQQQQQQQSTGAGEHSGQMDA.

2 residues coordinate Mg(2+): D488 and D494. The KH domain maps to 555-614 (PKLYTMKINPEKIRDVIGKGGAVIRALTEETGTQINIDEDGTITIASTDSAKADEAKRRI). One can recognise an S1 motif domain in the interval 624–692 (GKIYEGPVVK…EKGRVKLSMR (69 aa)). Positions 692-758 (RALLDRPMGD…AGEHSGQMDA (67 aa)) are disordered. Basic and acidic residues predominate over residues 707 to 735 (PAERGERGDRGDRGDRPERGERRERREPA). The segment covering 736–745 (GADQQQQQQQ) has biased composition (low complexity).

Belongs to the polyribonucleotide nucleotidyltransferase family. Mg(2+) is required as a cofactor.

It is found in the cytoplasm. It catalyses the reaction RNA(n+1) + phosphate = RNA(n) + a ribonucleoside 5'-diphosphate. Functionally, involved in mRNA degradation. Catalyzes the phosphorolysis of single-stranded polyribonucleotides processively in the 3'- to 5'-direction. This Paracidovorax citrulli (strain AAC00-1) (Acidovorax citrulli) protein is Polyribonucleotide nucleotidyltransferase.